A 179-amino-acid polypeptide reads, in one-letter code: Large ribosomal subunit protein uL5 (179 aa).

The protein belongs to the universal ribosomal protein uL5 family. As to quaternary structure, part of the 50S ribosomal subunit; part of the 5S rRNA/L5/L18/L25 subcomplex. Contacts the 5S rRNA and the P site tRNA. Forms a bridge to the 30S subunit in the 70S ribosome.

This is one of the proteins that bind and probably mediate the attachment of the 5S RNA into the large ribosomal subunit, where it forms part of the central protuberance. In the 70S ribosome it contacts protein S13 of the 30S subunit (bridge B1b), connecting the 2 subunits; this bridge is implicated in subunit movement. Contacts the P site tRNA; the 5S rRNA and some of its associated proteins might help stabilize positioning of ribosome-bound tRNAs. This chain is Large ribosomal subunit protein uL5, found in Shouchella clausii (strain KSM-K16) (Alkalihalobacillus clausii).